We begin with the raw amino-acid sequence, 347 residues long: Phenylalanine--tRNA ligase alpha subunit (347 aa).

Residue Glu262 participates in Mg(2+) binding.

The protein belongs to the class-II aminoacyl-tRNA synthetase family. Phe-tRNA synthetase alpha subunit type 1 subfamily. In terms of assembly, tetramer of two alpha and two beta subunits. Mg(2+) serves as cofactor.

The protein localises to the cytoplasm. It catalyses the reaction tRNA(Phe) + L-phenylalanine + ATP = L-phenylalanyl-tRNA(Phe) + AMP + diphosphate + H(+). The protein is Phenylalanine--tRNA ligase alpha subunit of Roseiflexus sp. (strain RS-1).